The primary structure comprises 668 residues: Threonine--tRNA ligase (668 aa).

The region spanning 1-64 (MSEAIFLTFP…ADGKIEIITR (64 aa)) is the TGS domain. The segment at 245 to 553 (DHRKLGREMD…LIENFAGHLP (309 aa)) is catalytic. Residues C347, H398, and H530 each contribute to the Zn(2+) site.

It belongs to the class-II aminoacyl-tRNA synthetase family. Homodimer. Requires Zn(2+) as cofactor.

The protein localises to the cytoplasm. The catalysed reaction is tRNA(Thr) + L-threonine + ATP = L-threonyl-tRNA(Thr) + AMP + diphosphate + H(+). Catalyzes the attachment of threonine to tRNA(Thr) in a two-step reaction: L-threonine is first activated by ATP to form Thr-AMP and then transferred to the acceptor end of tRNA(Thr). Also edits incorrectly charged L-seryl-tRNA(Thr). This chain is Threonine--tRNA ligase, found in Rhizobium leguminosarum bv. trifolii (strain WSM2304).